We begin with the raw amino-acid sequence, 108 residues long: Phosphoribosyl-ATP pyrophosphatase (108 aa).

Belongs to the PRA-PH family.

It localises to the cytoplasm. The catalysed reaction is 1-(5-phospho-beta-D-ribosyl)-ATP + H2O = 1-(5-phospho-beta-D-ribosyl)-5'-AMP + diphosphate + H(+). It participates in amino-acid biosynthesis; L-histidine biosynthesis; L-histidine from 5-phospho-alpha-D-ribose 1-diphosphate: step 2/9. This Trichlorobacter lovleyi (strain ATCC BAA-1151 / DSM 17278 / SZ) (Geobacter lovleyi) protein is Phosphoribosyl-ATP pyrophosphatase.